The primary structure comprises 286 residues: Translocon-associated protein subunit alpha (286 aa).

An N-terminal signal peptide occupies residues 1–18; the sequence is MRLLPRLLLLLLLVFPAT. Residues 19–207 lie on the Lumenal side of the membrane; it reads VLFRGGPRGL…EREDGLDGET (189 aa). A compositionally biased stretch (acidic residues) spans 39-75; that stretch reads EETVEDSIIEDEDDEAEVEEDEPTDLVEDKEEEDVSG. The disordered stretch occupies residues 39–83; the sequence is EETVEDSIIEDEDDEAEVEEDEPTDLVEDKEEEDVSGEPEASPSA. N-linked (GlcNAc...) asparagine glycans are attached at residues asparagine 136 and asparagine 191. The helical transmembrane segment at 208–228 threads the bilayer; it reads IFMYMFLAGLGLLVIVGLHQL. Residues 229–286 are Cytoplasmic-facing; the sequence is LESRKRKRPIQKVEMGTSSQNDVDMSWIPQETLNQINKASPRRLPRKRAQKRSVGSDE. At serine 247 the chain carries Phosphoserine. Threonine 260 is subject to Phosphothreonine. The interval 261-286 is disordered; the sequence is LNQINKASPRRLPRKRAQKRSVGSDE. Position 268 is a phosphoserine (serine 268). The span at 268–279 shows a compositional bias: basic residues; the sequence is SPRRLPRKRAQK.

The protein belongs to the TRAP-alpha family. In terms of assembly, heterotetramer of TRAP-alpha, TRAP-beta, TRAP-delta and TRAP-gamma. Interacts with palmitoylated calnexin (CALX), the interaction is required for efficient folding of glycosylated proteins.

Its subcellular location is the endoplasmic reticulum membrane. Its function is as follows. TRAP proteins are part of a complex whose function is to bind calcium to the ER membrane and thereby regulate the retention of ER resident proteins. May be involved in the recycling of the translocation apparatus after completion of the translocation process or may function as a membrane-bound chaperone facilitating folding of translocated proteins. The sequence is that of Translocon-associated protein subunit alpha (SSR1) from Homo sapiens (Human).